The chain runs to 185 residues: Elongation factor P (185 aa).

Belongs to the elongation factor P family.

It localises to the cytoplasm. Its pathway is protein biosynthesis; polypeptide chain elongation. In terms of biological role, involved in peptide bond synthesis. Stimulates efficient translation and peptide-bond synthesis on native or reconstituted 70S ribosomes in vitro. Probably functions indirectly by altering the affinity of the ribosome for aminoacyl-tRNA, thus increasing their reactivity as acceptors for peptidyl transferase. This chain is Elongation factor P, found in Bacillus licheniformis (strain ATCC 14580 / DSM 13 / JCM 2505 / CCUG 7422 / NBRC 12200 / NCIMB 9375 / NCTC 10341 / NRRL NRS-1264 / Gibson 46).